A 62-amino-acid polypeptide reads, in one-letter code: Photosystem II reaction center protein Z (62 aa).

A run of 2 helical transmembrane segments spans residues serine 8–alanine 28 and phenylalanine 41–isoleucine 61.

The protein belongs to the PsbZ family. PSII is composed of 1 copy each of membrane proteins PsbA, PsbB, PsbC, PsbD, PsbE, PsbF, PsbH, PsbI, PsbJ, PsbK, PsbL, PsbM, PsbT, PsbY, PsbZ, Psb30/Ycf12, at least 3 peripheral proteins of the oxygen-evolving complex and a large number of cofactors. It forms dimeric complexes.

It localises to the plastid. The protein localises to the chloroplast thylakoid membrane. In terms of biological role, may control the interaction of photosystem II (PSII) cores with the light-harvesting antenna, regulates electron flow through the 2 photosystem reaction centers. PSII is a light-driven water plastoquinone oxidoreductase, using light energy to abstract electrons from H(2)O, generating a proton gradient subsequently used for ATP formation. The polypeptide is Photosystem II reaction center protein Z (Cryptomeria japonica (Japanese cedar)).